The following is a 482-amino-acid chain: MVQLNQNFINTIAQELPAHLSMDDFIAACSRPLRRSIRVNTLKISSEDFKQLMLPKGWTFEPIPWCEDGFWISYDEEEQLGNALEHIQGLFYIQEASSMLPPTALFTPNADWQCVLDLASAPGSKTTQMAALMNNQGLLVANEYSASRVKVLHANVLRMGASHCALTHFDGRVFGEYLYESFDAVLIDAPCGGEGTVRKDADALKSWSLDEVLEISETQKALIESAFLALKPGGSLVYSTCTLNRHENQGVCEYLQQTYGDAVQFESLSQLFDGAEKATTPEGFLHVWPQIYDSEGFFVAKLTKTRSVPRLQPEPKLQKNFPFTEASAKQAKAIQAYFADDLGIKLPDDLIMVRDDEFWLFPHEFRDFIGKMRFQRIGVKLADHSKHGFKVRHEAIIALAGKALTAGAANGAKVVDVSDEQAKEYLMGRDIPLDTAGKAQGEVIVCYGGAPLGMAKHLGNKLKNSLPRDLVKDKVLLLPPQA.

Residues 119 to 125 (ASAPGSK), E143, D170, and D188 each bind S-adenosyl-L-methionine. The active-site Nucleophile is the C241.

The protein belongs to the class I-like SAM-binding methyltransferase superfamily. RsmB/NOP family.

It localises to the cytoplasm. It carries out the reaction cytidine(1407) in 16S rRNA + S-adenosyl-L-methionine = 5-methylcytidine(1407) in 16S rRNA + S-adenosyl-L-homocysteine + H(+). Its function is as follows. Specifically methylates the cytosine at position 1407 (m5C1407) of 16S rRNA. This Shewanella sp. (strain MR-7) protein is Ribosomal RNA small subunit methyltransferase F.